A 508-amino-acid chain; its full sequence is Photosystem II CP47 reaction center protein (508 aa).

A run of 6 helical transmembrane segments spans residues A21–S36, I101–W115, G140–F156, I203–S218, V237–V252, and I457–R472.

Belongs to the PsbB/PsbC family. PsbB subfamily. In terms of assembly, PSII is composed of 1 copy each of membrane proteins PsbA, PsbB, PsbC, PsbD, PsbE, PsbF, PsbH, PsbI, PsbJ, PsbK, PsbL, PsbM, PsbT, PsbY, PsbZ, Psb30/Ycf12, at least 3 peripheral proteins of the oxygen-evolving complex and a large number of cofactors. It forms dimeric complexes. It depends on Binds multiple chlorophylls. PSII binds additional chlorophylls, carotenoids and specific lipids. as a cofactor.

The protein localises to the plastid. Its subcellular location is the chloroplast thylakoid membrane. Its function is as follows. One of the components of the core complex of photosystem II (PSII). It binds chlorophyll and helps catalyze the primary light-induced photochemical processes of PSII. PSII is a light-driven water:plastoquinone oxidoreductase, using light energy to abstract electrons from H(2)O, generating O(2) and a proton gradient subsequently used for ATP formation. The protein is Photosystem II CP47 reaction center protein of Bigelowiella natans (Pedinomonas minutissima).